The chain runs to 455 residues: Glutamyl-tRNA reductase (455 aa).

Substrate-binding positions include 49–52 (TCNR), serine 109, 114–116 (ETQ), and glutamine 120. Cysteine 50 (nucleophile) is an active-site residue. 189–194 (GAGKMG) is an NADP(+) binding site.

The protein belongs to the glutamyl-tRNA reductase family. As to quaternary structure, homodimer.

It catalyses the reaction (S)-4-amino-5-oxopentanoate + tRNA(Glu) + NADP(+) = L-glutamyl-tRNA(Glu) + NADPH + H(+). It participates in porphyrin-containing compound metabolism; protoporphyrin-IX biosynthesis; 5-aminolevulinate from L-glutamyl-tRNA(Glu): step 1/2. Functionally, catalyzes the NADPH-dependent reduction of glutamyl-tRNA(Glu) to glutamate 1-semialdehyde (GSA). This Bacillus pumilus (strain SAFR-032) protein is Glutamyl-tRNA reductase.